Reading from the N-terminus, the 195-residue chain is HTH-type transcriptional regulator BetI (195 aa).

In terms of domain architecture, HTH tetR-type spans 8–68; the sequence is EIRRAQLIDA…ATMRHVLRDL (61 aa). Positions 31–50 form a DNA-binding region, H-T-H motif; it reads TLASVAQRANISTGIVSHYF.

Its pathway is amine and polyamine biosynthesis; betaine biosynthesis via choline pathway [regulation]. Repressor involved in the biosynthesis of the osmoprotectant glycine betaine. It represses transcription of the choline transporter BetT and the genes of BetAB involved in the synthesis of glycine betaine. The sequence is that of HTH-type transcriptional regulator BetI from Burkholderia thailandensis (strain ATCC 700388 / DSM 13276 / CCUG 48851 / CIP 106301 / E264).